Consider the following 141-residue polypeptide: Nucleoside diphosphate kinase (141 aa).

ATP contacts are provided by Lys11, Phe59, Arg87, Thr93, Arg104, and Asn114. His117 functions as the Pros-phosphohistidine intermediate in the catalytic mechanism.

This sequence belongs to the NDK family. Homotetramer. Mg(2+) is required as a cofactor.

The protein resides in the cytoplasm. The catalysed reaction is a 2'-deoxyribonucleoside 5'-diphosphate + ATP = a 2'-deoxyribonucleoside 5'-triphosphate + ADP. The enzyme catalyses a ribonucleoside 5'-diphosphate + ATP = a ribonucleoside 5'-triphosphate + ADP. Major role in the synthesis of nucleoside triphosphates other than ATP. The ATP gamma phosphate is transferred to the NDP beta phosphate via a ping-pong mechanism, using a phosphorylated active-site intermediate. The polypeptide is Nucleoside diphosphate kinase (Xanthomonas axonopodis pv. citri (strain 306)).